Here is a 269-residue protein sequence, read N- to C-terminus: Troponin T, fast skeletal muscle (269 aa).

Residues 1-23 are compositionally biased toward acidic residues; the sequence is MSDEEVEQVEEQYEEEEEAQEEA. The interval 1 to 72 is disordered; it reads MSDEEVEQVE…EKVDFDDIQK (72 aa). The residue at position 2 (Ser2) is an N-acetylserine. At Ser2 the chain carries Phosphoserine. The span at 24–34 shows a compositional bias: basic and acidic residues; it reads AEVHEEVHEPE. Residues 35 to 47 are compositionally biased toward acidic residues; that stretch reads EVQEDTAEEDAEE. Positions 60–72 are enriched in basic and acidic residues; that stretch reads PEGEKVDFDDIQK. Ser88 carries the post-translational modification Phosphoserine. The segment covering 111 to 153 has biased composition (basic and acidic residues); it reads RAERAEQQRIRAEKERERQNRLAEEKARREEEDAKRRAEDDLK. The segment at 111–158 is disordered; that stretch reads RAERAEQQRIRAEKERERQNRLAEEKARREEEDAKRRAEDDLKKKKAL. 3 positions are modified to phosphoserine: Ser159, Ser166, and Ser167. Residues 245–269 form a disordered region; that stretch reads RIDQAQKHSKKAGTPAKGKVGGRWK.

Belongs to the troponin T family. As to expression, in fetal and adult fast skeletal muscles, with a higher level expression in fetal than in adult muscle.

Functionally, troponin T is the tropomyosin-binding subunit of troponin, the thin filament regulatory complex which confers calcium-sensitivity to striated muscle actomyosin ATPase activity. This Homo sapiens (Human) protein is Troponin T, fast skeletal muscle (TNNT3).